A 368-amino-acid polypeptide reads, in one-letter code: GTPase Obg (368 aa).

In terms of domain architecture, Obg spans 1–161; that stretch reads MRFVDEATIT…RSLRLELKIL (161 aa). Positions 162–337 constitute an OBG-type G domain; it reads ADAGLLGLPN…VVAEMWRMRD (176 aa). GTP-binding positions include 168 to 175, 193 to 197, 217 to 220, 290 to 293, and 318 to 320; these read GLPNAGKS, FTTLI, DIPG, NKID, and SAL. Residues serine 175 and threonine 195 each contribute to the Mg(2+) site.

It belongs to the TRAFAC class OBG-HflX-like GTPase superfamily. OBG GTPase family. Monomer. Requires Mg(2+) as cofactor.

It localises to the cytoplasm. An essential GTPase which binds GTP, GDP and possibly (p)ppGpp with moderate affinity, with high nucleotide exchange rates and a fairly low GTP hydrolysis rate. Plays a role in control of the cell cycle, stress response, ribosome biogenesis and in those bacteria that undergo differentiation, in morphogenesis control. The sequence is that of GTPase Obg from Nitratidesulfovibrio vulgaris (strain DSM 19637 / Miyazaki F) (Desulfovibrio vulgaris).